The sequence spans 185 residues: Ribosome-recycling factor (185 aa).

The segment at 128–158 is disordered; the sequence is VRNTRQDANNKVKKLEKDKEISEDESKKAQE.

It belongs to the RRF family.

It localises to the cytoplasm. Functionally, responsible for the release of ribosomes from messenger RNA at the termination of protein biosynthesis. May increase the efficiency of translation by recycling ribosomes from one round of translation to another. In Helicobacter pylori (strain J99 / ATCC 700824) (Campylobacter pylori J99), this protein is Ribosome-recycling factor.